Reading from the N-terminus, the 51-residue chain is Light-harvesting protein B-800/850 beta chain (51 aa).

Residues 2–23 (ADDANKVWPSGLTTAEAEELQK) are Cytoplasmic-facing. Residues 24 to 46 (GLVDGTRVFGVIAVLAHILAYAY) traverse the membrane as a helical segment. Histidine 40 provides a ligand contact to a bacteriochlorophyll. Over 47–51 (TPWLH) the chain is Periplasmic.

It belongs to the antenna complex beta subunit family. As to quaternary structure, an alpha/beta heterodimer conjugated to 3 bacteriochlorophyll molecules. The core complex is formed by different alpha and beta chains, binding bacteriochlorophyll molecules, and arranged most probably in tetrameric structures disposed around the reaction center. The non-pigmented gamma chains may constitute additional components.

The protein resides in the cell inner membrane. Its function is as follows. Antenna complexes are light-harvesting systems, which transfer the excitation energy to the reaction centers. The chain is Light-harvesting protein B-800/850 beta chain (pucB) from Rubrivivax gelatinosus (Rhodocyclus gelatinosus).